Consider the following 518-residue polypeptide: Membrane-bound glycerophospholipid O-acyltransferase 2 (518 aa).

Helical transmembrane passes span 21–41, 60–80, 87–107, 183–203, 230–250, and 267–283; these read PVDQ…AIWF, TLLG…HFVI, YLMI…FALG, FMGI…FIEG, IAVA…MTIT, and ASWP…LMAA. Catalysis depends on residues asparagine 341 and histidine 372. 3 consecutive transmembrane segments (helical) span residues 365–385, 415–435, and 443–463; these read FILS…FLTG, IITW…FVLL, and FYSS…LVFP.

Belongs to the membrane-bound acyltransferase family.

The protein localises to the endoplasmic reticulum membrane. It catalyses the reaction a 1-acyl-sn-glycero-3-phosphocholine + an acyl-CoA = a 1,2-diacyl-sn-glycero-3-phosphocholine + CoA. The catalysed reaction is a 1-acyl-sn-glycero-3-phosphoethanolamine + an acyl-CoA = a 1,2-diacyl-sn-glycero-3-phosphoethanolamine + CoA. It carries out the reaction a 1-acyl-sn-glycero-3-phosphate + an acyl-CoA = a 1,2-diacyl-sn-glycero-3-phosphate + CoA. The enzyme catalyses (9Z)-hexadecenoyl-CoA + 1-hexadecanoyl-sn-glycero-3-phosphocholine = 1-hexadecanoyl-2-(9Z-hexadecenoyl)-sn-glycero-3-phosphocholine + CoA. It catalyses the reaction 1-hexadecanoyl-sn-glycero-3-phosphoethanolamine + (9Z)-octadecenoyl-CoA = 1-hexadecanoyl-2-(9Z-octadecenoyl)-sn-glycero-3-phosphoethanolamine + CoA. The catalysed reaction is 1-hexadecanoyl-sn-glycero-3-phosphoethanolamine + (9Z)-hexadecenoyl-CoA = 1-hexadecanoyl-2-(9Z)-hexadecenoyl-sn-glycero-3-phosphoethanolamine + CoA. It carries out the reaction 1-(9Z-octadecenoyl)-sn-glycero-3-phospho-L-serine + hexadecanoyl-CoA = 1-(9Z)-octadecenoyl-2-hexadecanoyl-sn-glycero-3-phosphoserine + CoA. The enzyme catalyses (9Z,12Z)-octadecadienoyl-CoA + 1-hexadecanoyl-sn-glycero-3-phosphocholine = 1-hexadecanoyl-2-(9Z,12Z-octadecadienoyl)-sn-glycero-3-phosphocholine + CoA. It catalyses the reaction 1-hexadecanoyl-sn-glycero-3-phosphocholine + (9Z)-octadecenoyl-CoA = 1-hexadecanoyl-2-(9Z-octadecenoyl)-sn-glycero-3-phosphocholine + CoA. The catalysed reaction is 1-hexadecanoyl-sn-glycero-3-phosphate + (9Z)-hexadecenoyl-CoA = 1-hexadecanoyl-2-[(9Z)-hexadec-9-enoyl]-sn-glycero-3-phosphate + CoA. It carries out the reaction 1-hexadecanoyl-sn-glycero-3-phosphate + (9Z)-octadecenoyl-CoA = 1-hexadecanoyl-2-(9Z-octadecenoyl)-sn-glycero-3-phosphate + CoA. The enzyme catalyses a 1-O-(1Z-alkenyl)-sn-glycero-3-phosphocholine + (9Z)-octadecenoyl-CoA = 1-O-(1Z)-alkenyl-2-(9Z)-octadecenoyl-sn-glycero-3-phosphocholine + CoA. It catalyses the reaction a 1-O-(1Z-alkenyl)-sn-glycero-3-phosphoethanolamine + (9Z)-octadecenoyl-CoA = 1-O-(1Z)-alkenyl-2-(9Z)-octadecenoyl-sn-glycero-3-phosphoethanolamine + CoA. The catalysed reaction is 1-octadecanoyl-sn-glycero-3-phosphoethanolamine + (9Z)-octadecenoyl-CoA = 1-octadecanoyl-2-(9Z-octadecenoyl)-sn-glycero-3-phosphoethanolamine + CoA. It carries out the reaction 1-octadecanoyl-sn-glycero-3-phosphocholine + (9Z)-octadecenoyl-CoA = 1-octadecanoyl-2-(9Z-octadecenoyl)-sn-glycero-3-phosphocholine + CoA. The enzyme catalyses 1-(9Z-octadecenoyl)-sn-glycero-3-phosphoethanolamine + (9Z)-octadecenoyl-CoA = 1,2-di-(9Z-octadecenoyl)-sn-glycero-3-phosphoethanolamine + CoA. It functions in the pathway lipid metabolism; phospholipid metabolism. Its function is as follows. Acyltransferase which catalyzes the transfer of an acyl group from an acyl-CoA to a lysophospholipid leading to the production of a phospholipid and participates in the reacylation step of the phospholipid remodeling pathway also known as the Lands cycle. May catalyze preferentially the acylation of lysophosphatidylethanolamine (1-acyl-sn-glycero-3-phosphoethanolamine or LPE) and lysophosphatidic acid (LPA) and to a lesser extend lysophosphatidylcholine (LPC) and lysophosphatidylserine (LPS). Prefers oleoyl-CoA as the acyl donor. This Gallus gallus (Chicken) protein is Membrane-bound glycerophospholipid O-acyltransferase 2.